The following is a 198-amino-acid chain: Phage-like element PBSX protein XkdA (198 aa).

This sequence to B.subtilis YqaB.

This is Phage-like element PBSX protein XkdA (xkdA) from Bacillus subtilis (strain 168).